Consider the following 288-residue polypeptide: Bifunctional protein FolD (288 aa).

NADP(+) is bound by residues Gly-166 to Ser-168, Ser-191, and Val-232.

This sequence belongs to the tetrahydrofolate dehydrogenase/cyclohydrolase family. Homodimer.

It catalyses the reaction (6R)-5,10-methylene-5,6,7,8-tetrahydrofolate + NADP(+) = (6R)-5,10-methenyltetrahydrofolate + NADPH. The enzyme catalyses (6R)-5,10-methenyltetrahydrofolate + H2O = (6R)-10-formyltetrahydrofolate + H(+). It functions in the pathway one-carbon metabolism; tetrahydrofolate interconversion. Functionally, catalyzes the oxidation of 5,10-methylenetetrahydrofolate to 5,10-methenyltetrahydrofolate and then the hydrolysis of 5,10-methenyltetrahydrofolate to 10-formyltetrahydrofolate. The polypeptide is Bifunctional protein FolD (Roseiflexus castenholzii (strain DSM 13941 / HLO8)).